Consider the following 93-residue polypeptide: uncharacterized protein (93 aa).

The stretch at 25–68 (DIKKLSQVKSELEQGKALLEEEKKELIEKNSNLNLQISNMNHLK) forms a coiled coil.

This is an uncharacterized protein from Dictyostelium discoideum (Social amoeba).